The following is a 197-amino-acid chain: uncharacterized protein (197 aa).

The next 4 helical transmembrane spans lie at 11–31, 85–105, 109–129, and 174–194; these read IALI…ISAS, STFM…SIFV, AVVV…VVLF, and VGTG…YPFI.

The protein localises to the cell membrane. This is an uncharacterized protein from Methanocaldococcus jannaschii (strain ATCC 43067 / DSM 2661 / JAL-1 / JCM 10045 / NBRC 100440) (Methanococcus jannaschii).